The sequence spans 485 residues: Glutamyl-tRNA(Gln) amidotransferase subunit A (485 aa).

Active-site charge relay system residues include Lys-79 and Ser-154. Ser-178 functions as the Acyl-ester intermediate in the catalytic mechanism.

It belongs to the amidase family. GatA subfamily. In terms of assembly, heterotrimer of A, B and C subunits.

The catalysed reaction is L-glutamyl-tRNA(Gln) + L-glutamine + ATP + H2O = L-glutaminyl-tRNA(Gln) + L-glutamate + ADP + phosphate + H(+). Its function is as follows. Allows the formation of correctly charged Gln-tRNA(Gln) through the transamidation of misacylated Glu-tRNA(Gln) in organisms which lack glutaminyl-tRNA synthetase. The reaction takes place in the presence of glutamine and ATP through an activated gamma-phospho-Glu-tRNA(Gln). This chain is Glutamyl-tRNA(Gln) amidotransferase subunit A, found in Sulfurihydrogenibium sp. (strain YO3AOP1).